Consider the following 104-residue polypeptide: Large ribosomal subunit protein bL21c (104 aa).

The protein belongs to the bacterial ribosomal protein bL21 family. In terms of assembly, part of the 50S ribosomal subunit.

The protein localises to the plastid. It localises to the chloroplast. In terms of biological role, this protein binds to 23S rRNA. The polypeptide is Large ribosomal subunit protein bL21c (Guillardia theta (Cryptophyte)).